The chain runs to 130 residues: U-scoloptoxin(16)-Er4a (130 aa).

A signal peptide spans 1-26 (MNTVSVVQFLAVGCAVFVLYGRGVFA).

This sequence belongs to the scoloptoxin-16 family. In terms of processing, contains 3 disulfide bonds. In terms of tissue distribution, expressed by the venom gland.

It localises to the secreted. This chain is U-scoloptoxin(16)-Er4a, found in Ethmostigmus rubripes (Giant centipede).